A 528-amino-acid polypeptide reads, in one-letter code: Phosphoenolpyruvate carboxykinase (ATP) (528 aa).

Residues R56, Y192, and K198 each coordinate substrate. Residues K198, H217, and 233–241 (GLSGTGKTT) contribute to the ATP site. Residues K198 and H217 each coordinate Mn(2+). D254 contacts Mn(2+). 3 residues coordinate ATP: E282, R319, and T444. R319 provides a ligand contact to substrate.

The protein belongs to the phosphoenolpyruvate carboxykinase (ATP) family. The cofactor is Mn(2+).

Its subcellular location is the cytoplasm. The catalysed reaction is oxaloacetate + ATP = phosphoenolpyruvate + ADP + CO2. It functions in the pathway carbohydrate biosynthesis; gluconeogenesis. Its function is as follows. Involved in the gluconeogenesis. Catalyzes the conversion of oxaloacetate (OAA) to phosphoenolpyruvate (PEP) through direct phosphoryl transfer between the nucleoside triphosphate and OAA. In Geobacillus kaustophilus (strain HTA426), this protein is Phosphoenolpyruvate carboxykinase (ATP).